The primary structure comprises 345 residues: L-threonine 3-dehydrogenase (345 aa).

Cysteine 42 is a Zn(2+) binding site. Active-site charge relay system residues include threonine 44 and histidine 47. 6 residues coordinate Zn(2+): histidine 67, glutamate 68, cysteine 97, cysteine 100, cysteine 103, and cysteine 111. Residues isoleucine 179, aspartate 199, arginine 204, 266–268 (LGI), and 290–291 (IY) each bind NAD(+).

Belongs to the zinc-containing alcohol dehydrogenase family. In terms of assembly, homotetramer. Zn(2+) is required as a cofactor.

The protein resides in the cytoplasm. The catalysed reaction is L-threonine + NAD(+) = (2S)-2-amino-3-oxobutanoate + NADH + H(+). Its pathway is amino-acid degradation; L-threonine degradation via oxydo-reductase pathway; glycine from L-threonine: step 1/2. Its function is as follows. Catalyzes the NAD(+)-dependent oxidation of L-threonine to 2-amino-3-ketobutyrate. The chain is L-threonine 3-dehydrogenase from Rhizobium rhizogenes (strain K84 / ATCC BAA-868) (Agrobacterium radiobacter).